Reading from the N-terminus, the 137-residue chain is Large ribosomal subunit protein uL16c (137 aa).

This sequence belongs to the universal ribosomal protein uL16 family. As to quaternary structure, part of the 50S ribosomal subunit.

The protein localises to the plastid. It is found in the chloroplast. The sequence is that of Large ribosomal subunit protein uL16c from Thalassiosira pseudonana (Marine diatom).